The primary structure comprises 415 residues: Glutamate-1-semialdehyde 2,1-aminomutase (415 aa).

Lysine 260 carries the N6-(pyridoxal phosphate)lysine modification.

It belongs to the class-III pyridoxal-phosphate-dependent aminotransferase family. HemL subfamily. Requires pyridoxal 5'-phosphate as cofactor.

Its subcellular location is the cytoplasm. The enzyme catalyses (S)-4-amino-5-oxopentanoate = 5-aminolevulinate. It functions in the pathway porphyrin-containing compound metabolism; protoporphyrin-IX biosynthesis; 5-aminolevulinate from L-glutamyl-tRNA(Glu): step 2/2. This is Glutamate-1-semialdehyde 2,1-aminomutase from Methanoculleus marisnigri (strain ATCC 35101 / DSM 1498 / JR1).